A 452-amino-acid chain; its full sequence is Phosphoglucosamine mutase (452 aa).

The active-site Phosphoserine intermediate is the Ser-108. Residues Ser-108, Asp-247, Asp-249, and Asp-251 each contribute to the Mg(2+) site. At Ser-108 the chain carries Phosphoserine.

This sequence belongs to the phosphohexose mutase family. Requires Mg(2+) as cofactor. Activated by phosphorylation.

It carries out the reaction alpha-D-glucosamine 1-phosphate = D-glucosamine 6-phosphate. Functionally, catalyzes the conversion of glucosamine-6-phosphate to glucosamine-1-phosphate. The protein is Phosphoglucosamine mutase of Paraburkholderia phymatum (strain DSM 17167 / CIP 108236 / LMG 21445 / STM815) (Burkholderia phymatum).